We begin with the raw amino-acid sequence, 436 residues long: 3-ketoacyl-CoA thiolase (436 aa).

Cysteine 99 (acyl-thioester intermediate) is an active-site residue. Residues histidine 392 and cysteine 422 each act as proton acceptor in the active site.

It belongs to the thiolase-like superfamily. Thiolase family. Heterotetramer of two alpha chains (FadJ) and two beta chains (FadI).

The protein resides in the cytoplasm. The enzyme catalyses an acyl-CoA + acetyl-CoA = a 3-oxoacyl-CoA + CoA. Its pathway is lipid metabolism; fatty acid beta-oxidation. In terms of biological role, catalyzes the final step of fatty acid oxidation in which acetyl-CoA is released and the CoA ester of a fatty acid two carbons shorter is formed. The sequence is that of 3-ketoacyl-CoA thiolase from Aeromonas salmonicida (strain A449).